Here is a 286-residue protein sequence, read N- to C-terminus: ATP synthase gamma chain (286 aa).

This sequence belongs to the ATPase gamma chain family. As to quaternary structure, F-type ATPases have 2 components, CF(1) - the catalytic core - and CF(0) - the membrane proton channel. CF(1) has five subunits: alpha(3), beta(3), gamma(1), delta(1), epsilon(1). CF(0) has three main subunits: a, b and c.

It is found in the cell inner membrane. In terms of biological role, produces ATP from ADP in the presence of a proton gradient across the membrane. The gamma chain is believed to be important in regulating ATPase activity and the flow of protons through the CF(0) complex. In Pseudomonas savastanoi pv. phaseolicola (strain 1448A / Race 6) (Pseudomonas syringae pv. phaseolicola (strain 1448A / Race 6)), this protein is ATP synthase gamma chain.